A 379-amino-acid polypeptide reads, in one-letter code: MTAIRYEFIKTCKQTGARLGRVHTPHGSFDTPTFMPVGTLATVKTMSPEELKAMDSGIILSNTYHLWLRPGHEIVREAGGLHKFMNWDRAILTDSGGFQVFSLSDFRRIEEEGVHFRNHLNGDKLFLSPEKAMEIQNALGSDIMMAFDECPPFPATFEYMKKSVERTSRWAERCLKAHERPQDQGLFGIVQGGEFEELRRQSAKDLVSMDFPGYAIGGLSVGEPKDIMNRVLEFTTPLLPDDKPRYLMGVGSPDSLIDGAIRGVDMFDCVLPTRIARNGTCMTSEGRLVVKNAKFARDFGPLDPNCDCYTCKNYSRAYIRHLMKCDETFGIRLTSYHNLHFLLNLMEQVRQAIREDRLGDFREEFFEQYGFNKPNAKNF.

Asp-94 acts as the Proton acceptor in catalysis. Residues 94 to 98 (DSGGF), Asp-148, Gln-191, and Gly-218 each bind substrate. Residues 249-255 (GVGSPDS) form an RNA binding region. Asp-268 functions as the Nucleophile in the catalytic mechanism. The RNA binding; important for wobble base 34 recognition stretch occupies residues 273 to 277 (TRIAR). Zn(2+)-binding residues include Cys-306, Cys-308, Cys-311, and His-337.

The protein belongs to the queuine tRNA-ribosyltransferase family. In terms of assembly, homodimer. Within each dimer, one monomer is responsible for RNA recognition and catalysis, while the other monomer binds to the replacement base PreQ1. Zn(2+) serves as cofactor.

The enzyme catalyses 7-aminomethyl-7-carbaguanine + guanosine(34) in tRNA = 7-aminomethyl-7-carbaguanosine(34) in tRNA + guanine. Its pathway is tRNA modification; tRNA-queuosine biosynthesis. Catalyzes the base-exchange of a guanine (G) residue with the queuine precursor 7-aminomethyl-7-deazaguanine (PreQ1) at position 34 (anticodon wobble position) in tRNAs with GU(N) anticodons (tRNA-Asp, -Asn, -His and -Tyr). Catalysis occurs through a double-displacement mechanism. The nucleophile active site attacks the C1' of nucleotide 34 to detach the guanine base from the RNA, forming a covalent enzyme-RNA intermediate. The proton acceptor active site deprotonates the incoming PreQ1, allowing a nucleophilic attack on the C1' of the ribose to form the product. After dissociation, two additional enzymatic reactions on the tRNA convert PreQ1 to queuine (Q), resulting in the hypermodified nucleoside queuosine (7-(((4,5-cis-dihydroxy-2-cyclopenten-1-yl)amino)methyl)-7-deazaguanosine). This is Queuine tRNA-ribosyltransferase from Bacillus mycoides (strain KBAB4) (Bacillus weihenstephanensis).